The following is a 270-amino-acid chain: Glutamate 5-kinase (270 aa).

Residue lysine 17 participates in ATP binding. Substrate contacts are provided by serine 57, aspartate 144, and asparagine 160. ATP-binding positions include 180 to 181 (SD) and 222 to 228 (TGGMTSK).

This sequence belongs to the glutamate 5-kinase family.

It is found in the cytoplasm. It catalyses the reaction L-glutamate + ATP = L-glutamyl 5-phosphate + ADP. Its pathway is amino-acid biosynthesis; L-proline biosynthesis; L-glutamate 5-semialdehyde from L-glutamate: step 1/2. Functionally, catalyzes the transfer of a phosphate group to glutamate to form L-glutamate 5-phosphate. In Lactococcus lactis subsp. lactis (strain IL1403) (Streptococcus lactis), this protein is Glutamate 5-kinase.